Reading from the N-terminus, the 113-residue chain is uncharacterized protein (113 aa).

A Cupin type-2 domain is found at 41-88 (DWHHHPDSDELFIVLEGELLIDFKDKETAVLKANDSLLIPKGTVHRTR).

Belongs to the SchB/CurC family.

This is an uncharacterized protein from Bacillus subtilis (strain 168).